A 177-amino-acid polypeptide reads, in one-letter code: tRNA-splicing endonuclease (177 aa).

Active-site residues include tyrosine 114, histidine 123, and lysine 154.

It belongs to the tRNA-intron endonuclease family. Archaeal short subfamily. In terms of assembly, homotetramer; although the tetramer contains four active sites, only two participate in the cleavage. Therefore, it should be considered as a dimer of dimers.

It catalyses the reaction pretRNA = a 3'-half-tRNA molecule with a 5'-OH end + a 5'-half-tRNA molecule with a 2',3'-cyclic phosphate end + an intron with a 2',3'-cyclic phosphate and a 5'-hydroxyl terminus.. Its function is as follows. Endonuclease that removes tRNA introns. Cleaves pre-tRNA at the 5'- and 3'-splice sites to release the intron. The products are an intron and two tRNA half-molecules bearing 2',3' cyclic phosphate and 5'-OH termini. Recognizes a pseudosymmetric substrate in which 2 bulged loops of 3 bases are separated by a stem of 4 bp. This chain is tRNA-splicing endonuclease, found in Methanococcus vannielii (strain ATCC 35089 / DSM 1224 / JCM 13029 / OCM 148 / SB).